Consider the following 215-residue polypeptide: V-type ATP synthase subunit D (215 aa).

Belongs to the V-ATPase D subunit family.

Functionally, produces ATP from ADP in the presence of a proton gradient across the membrane. This chain is V-type ATP synthase subunit D, found in Anaeromyxobacter sp. (strain Fw109-5).